A 787-amino-acid polypeptide reads, in one-letter code: Endonuclease MutS2 (787 aa).

331–338 (GPNTGGKT) contributes to the ATP binding site. A Smr domain is found at 711–786 (IDVRGKTSDD…EQGVTIVELR (76 aa)).

This sequence belongs to the DNA mismatch repair MutS family. MutS2 subfamily. Homodimer. Binds to stalled ribosomes, contacting rRNA.

In terms of biological role, endonuclease that is involved in the suppression of homologous recombination and thus may have a key role in the control of bacterial genetic diversity. Functionally, acts as a ribosome collision sensor, splitting the ribosome into its 2 subunits. Detects stalled/collided 70S ribosomes which it binds and splits by an ATP-hydrolysis driven conformational change. Acts upstream of the ribosome quality control system (RQC), a ribosome-associated complex that mediates the extraction of incompletely synthesized nascent chains from stalled ribosomes and their subsequent degradation. Probably generates substrates for RQC. The chain is Endonuclease MutS2 from Caldicellulosiruptor saccharolyticus (strain ATCC 43494 / DSM 8903 / Tp8T 6331).